Here is an 867-residue protein sequence, read N- to C-terminus: DNA mismatch repair protein MutS (867 aa).

Residue 606–613 (GPNMSGKS) coordinates ATP.

It belongs to the DNA mismatch repair MutS family.

Functionally, this protein is involved in the repair of mismatches in DNA. It is possible that it carries out the mismatch recognition step. This protein has a weak ATPase activity. The protein is DNA mismatch repair protein MutS of Oceanobacillus iheyensis (strain DSM 14371 / CIP 107618 / JCM 11309 / KCTC 3954 / HTE831).